The sequence spans 80 residues: Penaeidin-3 (80 aa).

Residues 1–19 (MRLVVCLVYLVSFALVCQG) form the signal peptide. Gln-20 carries the pyrrolidone carboxylic acid modification. 3 disulfides stabilise this stretch: Cys-54–Cys-67, Cys-57–Cys-74, and Cys-68–Cys-75.

This sequence belongs to the penaeidin family. Post-translationally, the N-terminus forms pyrrolidone carboxylic acid. In terms of tissue distribution, strongly expressed in hemocytes, and to a lesser extent in heart, muscle, gills, intestine and eyestalk. Lowest expression in hepatopancreas.

The protein resides in the cytoplasmic granule. In terms of biological role, antibacterial and antifungal activity. Presents chitin-binding activity. This Penaeus indicus (Indian white prawn) protein is Penaeidin-3.